The following is a 388-amino-acid chain: Fructose-bisphosphate aldolase, chloroplastic (388 aa).

The transit peptide at 1–38 (MASATLLKSSFLPKKSEWGATRQAAAPKPVTVSMVVRA) directs the protein to the chloroplast. Arginine 72 lines the substrate pocket. The active-site Proton acceptor is glutamate 215. Residue lysine 257 is the Schiff-base intermediate with dihydroxyacetone-P of the active site. Substrate-binding positions include 299 to 301 (SGG) and arginine 329.

It belongs to the class I fructose-bisphosphate aldolase family. Homotetramer. In terms of tissue distribution, expressed in leaf mesophyll cells.

The protein localises to the plastid. The protein resides in the chloroplast. It localises to the plastoglobule. It catalyses the reaction beta-D-fructose 1,6-bisphosphate = D-glyceraldehyde 3-phosphate + dihydroxyacetone phosphate. The protein operates within carbohydrate degradation; glycolysis; D-glyceraldehyde 3-phosphate and glycerone phosphate from D-glucose: step 4/4. Its function is as follows. Plays a key role in glycolysis and gluconeogenesis. In Oryza sativa subsp. japonica (Rice), this protein is Fructose-bisphosphate aldolase, chloroplastic.